The following is a 507-amino-acid chain: Beta-glucosidase 13 (507 aa).

A signal peptide spans 1 to 22 (MRTKYFSLLVFIIVLASNEVIA). Gln-50 contributes to the a beta-D-glucoside binding site. Residue Asn-81 is glycosylated (N-linked (GlcNAc...) asparagine). Residues His-154 and 199-200 (NE) contribute to the a beta-D-glucoside site. The Proton donor role is filled by Glu-200. An intrachain disulfide couples Cys-219 to Cys-227. Asn-226 carries an N-linked (GlcNAc...) asparagine glycan. Tyr-344 serves as a coordination point for a beta-D-glucoside. An N-linked (GlcNAc...) asparagine glycan is attached at Asn-358. A beta-D-glucoside-binding positions include Glu-414, Trp-459, 466–467 (EW), and Phe-475. Glu-414 serves as the catalytic Nucleophile.

It belongs to the glycosyl hydrolase 1 family.

The enzyme catalyses Hydrolysis of terminal, non-reducing beta-D-glucosyl residues with release of beta-D-glucose.. This Arabidopsis thaliana (Mouse-ear cress) protein is Beta-glucosidase 13.